The following is a 129-amino-acid chain: M-zodatoxin-Lt8d (129 aa).

The signal sequence occupies residues 1–20 (MKYFVVALALVAAFACIAES). Positions 21 to 60 (KPAESEHELAEVEEENELADLEDAVWLEHLADLSDLEEAR) are excised as a propeptide. The short motif at 57-60 (EEAR) is the Processing quadruplet motif element.

Cleavage of the propeptide depends on the processing quadruplet motif (XXXR, with at least one of X being E). Expressed by the venom gland.

The protein localises to the secreted. Functionally, insecticidal, cytolytic and antimicrobial peptide. Forms voltage-dependent, ion-permeable channels in membranes. At high concentration causes cell membrane lysis. The sequence is that of M-zodatoxin-Lt8d (cit 1-4) from Lachesana tarabaevi (Spider).